The following is a 514-amino-acid chain: MVWEVKTNQMPNAVQKLLLVMDKRASGMNDSLELLQCNENLPSSPGYNSCDEHMELDDLPELQAVQSDPTQSGMYQLSSDVSHQEYPRSSWNQNTSDIPETTYRENEVDWLTELANIATSPQSPLMQCSFYNRSSPVHIIATSKSLHSYARPPPVSSSSKSEPAFPHHHWKEETPVRHERANSESESGIFCMSSLSDDDDLGWCNSWPSTVWHCFLKGTRLCFHKGSNKEWQDVEDFARAEGCDNEEDLQMGIHKGYGSDGLKLLSHEESVSFGESVLKLTFDPGTVEDGLLTVECKLDHPFYVKNKGWSSFYPSLTVVQHGIPCCEVHIGDVCLPPGHPDAINFDDSGVFDTFKSYDFTPMDSSAVYVLSSMARQRRASLSCGGPGGQDFARSGFSKNCGSPGSSQLSSNSLYAKAVKNHSSGTVSATSPNKCKRPMNAFMLFAKKYRVEYTQMYPGKDNRAISVILGDRWKKMKNEERRMYTLEAKALAEEQKRLNPDCWKRKRTNSGSQQH.

A disordered region spans residues 150-182 (ARPPPVSSSSKSEPAFPHHHWKEETPVRHERAN). Residues 170 to 182 (WKEETPVRHERAN) are compositionally biased toward basic and acidic residues. The AXH domain maps to 203-345 (WCNSWPSTVW…PPGHPDAINF (143 aa)). Positions 434–502 (CKRPMNAFML…EQKRLNPDCW (69 aa)) form a DNA-binding region, HMG box.

Binds the second PAH repeat of SIN3A. Binds TCF4. Binds RB1. Ubiquitinated by the CTLH E3 ubiquitin-protein ligase complex, leading to subsequent proteasomal degradation.

Its subcellular location is the nucleus. Transcriptional repressor that binds to the promoter region of target genes. Plays a role in the regulation of the cell cycle and of the Wnt pathway. Binds preferentially to the sequence 5'-TTCATTCATTCA-3'. Binding to the histone H1.0 promoter is enhanced by interaction with RB1. Disrupts the interaction between DNA and TCF4. The chain is HMG box-containing protein 1 (HBP1) from Homo sapiens (Human).